The following is a 452-amino-acid chain: Pup--protein ligase 1 (452 aa).

E9 lines the Mg(2+) pocket. R53 contacts ATP. Y55 provides a ligand contact to Mg(2+). D57 (proton acceptor) is an active-site residue. A Mg(2+)-binding site is contributed by E63. ATP contacts are provided by T66 and W419.

The protein belongs to the Pup ligase/Pup deamidase family. Pup-conjugating enzyme subfamily.

The enzyme catalyses ATP + [prokaryotic ubiquitin-like protein]-L-glutamate + [protein]-L-lysine = ADP + phosphate + N(6)-([prokaryotic ubiquitin-like protein]-gamma-L-glutamyl)-[protein]-L-lysine.. Its pathway is protein degradation; proteasomal Pup-dependent pathway. It functions in the pathway protein modification; protein pupylation. Its function is as follows. Catalyzes the covalent attachment of the prokaryotic ubiquitin-like protein modifier Pup to the proteasomal substrate proteins, thereby targeting them for proteasomal degradation. This tagging system is termed pupylation. The ligation reaction involves the side-chain carboxylate of the C-terminal glutamate of Pup and the side-chain amino group of a substrate lysine. This is Pup--protein ligase 1 from Rhodococcus erythropolis (Arthrobacter picolinophilus).